The primary structure comprises 731 residues: DNA ligase (731 aa).

Residues 47–51, 96–97, and E133 each bind NAD(+); these read DAEYD and SI. The N6-AMP-lysine intermediate role is filled by K135. Residues R156, E192, K313, and K337 each coordinate NAD(+). 4 residues coordinate Zn(2+): C462, C465, C480, and C486. In terms of domain architecture, BRCT spans 645–731; that stretch reads AATLPLAGMT…RGTPPNAGGA (87 aa).

This sequence belongs to the NAD-dependent DNA ligase family. LigA subfamily. Mg(2+) is required as a cofactor. Mn(2+) serves as cofactor.

The catalysed reaction is NAD(+) + (deoxyribonucleotide)n-3'-hydroxyl + 5'-phospho-(deoxyribonucleotide)m = (deoxyribonucleotide)n+m + AMP + beta-nicotinamide D-nucleotide.. Functionally, DNA ligase that catalyzes the formation of phosphodiester linkages between 5'-phosphoryl and 3'-hydroxyl groups in double-stranded DNA using NAD as a coenzyme and as the energy source for the reaction. It is essential for DNA replication and repair of damaged DNA. The polypeptide is DNA ligase (Acidovorax sp. (strain JS42)).